A 922-amino-acid polypeptide reads, in one-letter code: TBC1 domain family member 2A (922 aa).

The segment at M1 to R37 is disordered. Residues M1 to K168 form an interaction with CADH1 region. A compositionally biased stretch (polar residues) spans T8–P17. One can recognise a PH domain in the interval P43–W141. Residues N228–F297 form a disordered region. Over residues L262–A271 the composition is skewed to basic and acidic residues. Residues P275–P295 are compositionally biased toward polar residues. Residues S298–P435 form an interaction with RAC1 region. Coiled coils occupy residues A302–I333, L362–K417, and F443–K476. One can recognise a Rab-GAP TBC domain in the interval G619 to G811. The stretch at M869–L904 forms a coiled coil. S914 carries the phosphoserine modification.

In terms of assembly, interacts with activated RAC1 and CDH1.

It is found in the cytoplasm. The protein localises to the cytoplasmic vesicle. The protein resides in the cell junction. Acts as a GTPase-activating protein for RAB7A. Signal effector acting as a linker between RAC1 and RAB7A, leading to RAB7A inactivation and subsequent inhibition of cadherin degradation and reduced cell-cell adhesion. The protein is TBC1 domain family member 2A (Tbc1d2) of Mus musculus (Mouse).